The sequence spans 118 residues: Large ribosomal subunit protein bL20 (118 aa).

The protein belongs to the bacterial ribosomal protein bL20 family. In terms of assembly, part of the 50S ribosomal subunit. Contacts proteins L13 and L21.

Binds directly to 23S rRNA, probably serving to organize its structure. This chain is Large ribosomal subunit protein bL20 (rplT), found in Deinococcus radiodurans (strain ATCC 13939 / DSM 20539 / JCM 16871 / CCUG 27074 / LMG 4051 / NBRC 15346 / NCIMB 9279 / VKM B-1422 / R1).